Reading from the N-terminus, the 69-residue chain is uncharacterized protein (69 aa).

A coiled-coil region spans residues 21–64; that stretch reads LNLLKGGEEKISEVELKLDEMEKKMDSLLVQLEDLHRDNNDLAK.

This is an uncharacterized protein from Saccharomyces cerevisiae (strain ATCC 204508 / S288c) (Baker's yeast).